Here is a 161-residue protein sequence, read N- to C-terminus: Nucleotide-binding protein mma_0840 (161 aa).

This sequence belongs to the YajQ family.

In terms of biological role, nucleotide-binding protein. This Janthinobacterium sp. (strain Marseille) (Minibacterium massiliensis) protein is Nucleotide-binding protein mma_0840.